The sequence spans 364 residues: MQDRQKAQDYRALLLADTPLIDVRAPIEFEQGAMPGAINLPLMMDDERAAVGTCYKRQGADAALALGHRLVCGDIDQQRLEAWKAAYQRFPNGYLCCARGGQRSHIVQRWLQETGIDCPLIEGGYKALRQTAIQATWQLAQKPILLIGGCTGSGKTQLVRQQPNGVDLEGLARHRGSSFGRTLNPQLSQASFENKLAVELLKINARQTLKRWVLEDEGRTIGANHLPECLRERMAQAPIAVVEDPFALRLERLREEYFIRMHHDFTHAYGDEAGWQAYSKYLHHGLFAIRRRLGLQRFAELTDTLDRALAEQLSSGSTDGHMAWLVPLLNEYYDPMYRYQLEKKAANIVFRGTWQEVANWLKAQ.

A Rhodanese domain is found at 14 to 137; it reads LLADTPLIDV…LRQTAIQATW (124 aa). Cys97 functions as the S-selanylcysteine intermediate in the catalytic mechanism.

Belongs to the SelU family. Monomer.

It carries out the reaction 5-methylaminomethyl-2-thiouridine(34) in tRNA + selenophosphate + (2E)-geranyl diphosphate + H2O + H(+) = 5-methylaminomethyl-2-selenouridine(34) in tRNA + (2E)-thiogeraniol + phosphate + diphosphate. The enzyme catalyses 5-methylaminomethyl-2-thiouridine(34) in tRNA + (2E)-geranyl diphosphate = 5-methylaminomethyl-S-(2E)-geranyl-thiouridine(34) in tRNA + diphosphate. It catalyses the reaction 5-methylaminomethyl-S-(2E)-geranyl-thiouridine(34) in tRNA + selenophosphate + H(+) = 5-methylaminomethyl-2-(Se-phospho)selenouridine(34) in tRNA + (2E)-thiogeraniol. The catalysed reaction is 5-methylaminomethyl-2-(Se-phospho)selenouridine(34) in tRNA + H2O = 5-methylaminomethyl-2-selenouridine(34) in tRNA + phosphate. In terms of biological role, involved in the post-transcriptional modification of the uridine at the wobble position (U34) of tRNA(Lys), tRNA(Glu) and tRNA(Gln). Catalyzes the conversion of 2-thiouridine (S2U-RNA) to 2-selenouridine (Se2U-RNA). Acts in a two-step process involving geranylation of 2-thiouridine (S2U) to S-geranyl-2-thiouridine (geS2U) and subsequent selenation of the latter derivative to 2-selenouridine (Se2U) in the tRNA chain. The polypeptide is tRNA 2-selenouridine synthase (Salmonella enteritidis).